Here is a 174-residue protein sequence, read N- to C-terminus: uncharacterized protein (174 aa).

Helical transmembrane passes span 8–28 and 146–166; these read FLFI…NYVF and IVSW…IQFI.

The protein resides in the cell membrane. This is an uncharacterized protein from Haemophilus influenzae (strain ATCC 51907 / DSM 11121 / KW20 / Rd).